A 223-amino-acid polypeptide reads, in one-letter code: Cytotoxic T-lymphocyte protein 4 (223 aa).

An N-terminal signal peptide occupies residues 1-35; sequence MACLGFQRHKAQLNLATRTWPCTLLFFLLFIPVFC. Residues 36 to 161 lie on the Extracellular side of the membrane; sequence KAMHVAQPAV…IDPEPCPDSD (126 aa). The Ig-like V-type domain occupies 39–140; the sequence is HVAQPAVVLA…VELMYPPPYY (102 aa). A homodimerization region spans residues 46–50; it reads VLASS. Disulfide bonds link C58–C129 and C85–C103. N113 is a glycosylation site (N-linked (GlcNAc...) asparagine). Residues 134 to 139 are important for interaction with CD80 and CD86; sequence MYPPPY. Residue N145 is glycosylated (N-linked (GlcNAc...) asparagine). The homodimerization stretch occupies residues 150–155; that stretch reads YVIDPE. Residues 162-182 traverse the membrane as a helical segment; that stretch reads FLLWILAAVSSGLFFYSFLLT. The Cytoplasmic portion of the chain corresponds to 183–223; that stretch reads AVSLSKMLKKRSPLTTGVYVKMPPTEPECEKQFQPYFIPIN. At Y201 the chain carries Phosphotyrosine; by TXK and JAK2.

Homodimer; disulfide-linked. Binds to CD80/B7-1 and CD86/B7.2. Interacts with ICOSLG. In terms of processing, N-glycosylation is important for dimerization. Post-translationally, phosphorylation at Tyr-201 prevents binding to the AP-2 adapter complex, blocks endocytosis, and leads to retention of CTLA4 on the cell surface. Widely expressed with highest levels in lymphoid tissues. Detected in activated T-cells where expression levels are 30- to 50-fold less than CD28, the stimulatory coreceptor, on the cell surface following activation.

It localises to the cell membrane. Inhibitory receptor acting as a major negative regulator of T-cell responses. The affinity of CTLA4 for its natural B7 family ligands, CD80 and CD86, is considerably stronger than the affinity of their cognate stimulatory coreceptor CD28. In Homo sapiens (Human), this protein is Cytotoxic T-lymphocyte protein 4 (CTLA4).